The sequence spans 504 residues: Fumitremorgin C monooxygenase (504 aa).

Residues 12–32 form a helical membrane-spanning segment; that stretch reads LGVVGASLIVILGIILLFPLG. Cys-442 contributes to the heme binding site.

The protein belongs to the cytochrome P450 family. Heme serves as cofactor.

The protein localises to the membrane. It carries out the reaction fumitremorgin C + 2 reduced [NADPH--hemoprotein reductase] + 2 O2 = 12alpha,13alpha-dihydroxyfumitremorgin C + 2 oxidized [NADPH--hemoprotein reductase] + 2 H2O + 2 H(+). It functions in the pathway mycotoxin biosynthesis. Functionally, cytochrome P450 monooxygenase; part of the gene cluster that mediates the biosynthesis of fumitremorgins, indole alkaloids that carry not only intriguing chemical structures, but also interesting biological and pharmacological activities. The biosynthesis of fumitremorgin-type alkaloids begins by condensation of the two amino acids L-tryptophan and L-proline to brevianamide F, catalyzed by the non-ribosomal peptide synthetase ftmA. Brevianamide F is then prenylated by the prenyltransferase ftmPT1/ftmB in the presence of dimethylallyl diphosphate, resulting in the formation of tryprostatin B. The three cytochrome P450 monooxygenases, ftmP450-1/ftmC, ftmP450-2/ftmE and ftmP450-3/FtmG, are responsible for the conversion of tryprostatin B to 6-hydroxytryprostatin B, tryprostatin A to fumitremorgin C and fumitremorgin C to 12,13-dihydroxyfumitremorgin C, respectively. The putative methyltransferase ftmMT/ftmD is expected for the conversion of 6-hydroxytryprostatin B to tryprostatin A. FtmPT2/FtmH catalyzes the prenylation of 12,13-dihydroxyfumitre-morgin C in the presence of dimethylallyl diphosphate, resulting in the formation of fumitremorgin B. Fumitremorgin B is further converted to verruculogen by ftmOx1/ftmF via the insertion of an endoperoxide bond between the two prenyl moieties. In some fungal species, verruculogen is further converted to fumitremorgin A, but the enzymes involved in this step have not been identified yet. The protein is Fumitremorgin C monooxygenase of Aspergillus fumigatus (Neosartorya fumigata).